The primary structure comprises 80 residues: Myocilin opposite strand protein (80 aa).

Residues 53–80 (EQAPPPHRTYLTVPPAPPPSPAEDPTVS) form a disordered region.

This is Myocilin opposite strand protein from Homo sapiens (Human).